Consider the following 254-residue polypeptide: MRAFYGTELPNPLMLGTAQYPSPAILEQAFRASGAGVATVSLRRESGAGQTFWSMIRDLGVLILPNTAGCHTVKEAVTTAHMAREVFGTPWIKLELIGHTDSLQPDVFGLIEAARILTEDGFQVFPYTTDDLIVGERLLAAGCEVLMPWGAPIGSGRGLNNEYALRAMRAEFPDTPLVVDAGIGLPSHAARALELGYDAVLLNTAVARAGDPVEMARAMALAIQAGQLAHRADPIEARDMASASTPVIGKAFLS.

Catalysis depends on Lys-93, which acts as the Schiff-base intermediate with DXP. 1-deoxy-D-xylulose 5-phosphate is bound by residues Gly-154, 181 to 182 (AG), and 203 to 204 (NT).

This sequence belongs to the ThiG family. As to quaternary structure, homotetramer. Forms heterodimers with either ThiH or ThiS.

The protein localises to the cytoplasm. It catalyses the reaction [ThiS sulfur-carrier protein]-C-terminal-Gly-aminoethanethioate + 2-iminoacetate + 1-deoxy-D-xylulose 5-phosphate = [ThiS sulfur-carrier protein]-C-terminal Gly-Gly + 2-[(2R,5Z)-2-carboxy-4-methylthiazol-5(2H)-ylidene]ethyl phosphate + 2 H2O + H(+). It participates in cofactor biosynthesis; thiamine diphosphate biosynthesis. Functionally, catalyzes the rearrangement of 1-deoxy-D-xylulose 5-phosphate (DXP) to produce the thiazole phosphate moiety of thiamine. Sulfur is provided by the thiocarboxylate moiety of the carrier protein ThiS. In vitro, sulfur can be provided by H(2)S. This Ruegeria pomeroyi (strain ATCC 700808 / DSM 15171 / DSS-3) (Silicibacter pomeroyi) protein is Thiazole synthase.